The chain runs to 240 residues: Urease accessory protein UreF (240 aa).

It belongs to the UreF family. In terms of assembly, ureD, UreF and UreG form a complex that acts as a GTP-hydrolysis-dependent molecular chaperone, activating the urease apoprotein by helping to assemble the nickel containing metallocenter of UreC. The UreE protein probably delivers the nickel.

It localises to the cytoplasm. Required for maturation of urease via the functional incorporation of the urease nickel metallocenter. In Bradyrhizobium sp. (strain ORS 278), this protein is Urease accessory protein UreF.